We begin with the raw amino-acid sequence, 300 residues long: Ribosomal protein bS6--L-glutamate ligase (300 aa).

An ATP-grasp domain is found at Met104–Glu287. Residues Lys141, Glu178–Tyr179, Asp187, and Arg211–Asn213 each bind ATP. The Mg(2+) site is built by Asp248, Glu260, and Asn262. 3 residues coordinate Mn(2+): Asp248, Glu260, and Asn262.

The protein belongs to the RimK family. It depends on Mg(2+) as a cofactor. Requires Mn(2+) as cofactor.

Functionally, an L-glutamate ligase that catalyzes the ATP-dependent post-translational addition of glutamate residues to the C-terminus of ribosomal protein bS6 (RpsF). Is also able to catalyze the synthesis of poly-alpha-glutamate in vitro, via ATP hydrolysis from unprotected glutamate as substrate. The number of glutamate residues added to either RpsF or to poly-alpha-glutamate changes with pH. This Shigella boydii serotype 4 (strain Sb227) protein is Ribosomal protein bS6--L-glutamate ligase.